The following is a 200-amino-acid chain: ADP-ribosylation factor-like protein 4D (200 aa).

Residue glycine 2 is the site of N-myristoyl glycine attachment. Residues 27–34 (GLDSAGKT), 75–79 (DVGGQ), and 134–137 (NKQD) contribute to the GTP site.

It belongs to the small GTPase superfamily. Arf family. As to quaternary structure, interacts with CYTH2; the interaction is direct and ARL4D GTP-dependent. Does not interact with ARL4D.

The protein resides in the nucleus. Its subcellular location is the nucleolus. It localises to the cell membrane. The protein localises to the cytoplasm. Functionally, small GTP-binding protein which cycles between an inactive GDP-bound and an active GTP-bound form, and the rate of cycling is regulated by guanine nucleotide exchange factors (GEF) and GTPase-activating proteins (GAP). GTP-binding protein that does not act as an allosteric activator of the cholera toxin catalytic subunit. Recruits CYTH1, CYTH2, CYTH3 and CYTH4 to the plasma membrane in GDP-bound form. The protein is ADP-ribosylation factor-like protein 4D (ARL4D) of Bos taurus (Bovine).